Consider the following 479-residue polypeptide: F-box/LRR-repeat protein 16 (479 aa).

Residues 1 to 62 are disordered; that stretch reads MSSPGIDGDP…PTLPPPSLAA (62 aa). Positions 47–60 are enriched in pro residues; it reads CQPPPPPTLPPPSL. Omega-N-methylarginine is present on Arg-92. The F-box domain occupies 94–139; it reads PLATDEKILNGLFWYFSACEKCVLAQVCKAWRRVLYQPKFWAGLTP. LRR repeat units lie at residues 244–266, 267–290, 319–343, 345–369, 371–395, 396–420, and 446–470; these read ITSLSVSDCINVADDAIAAISQL, LPNLAELSLQAYHVTDTALAYFTA, LPNLTALSLSGCSKVTDDGVELVAE, LRKLRSLDLSWCPRITDMALEYVAC, LHRLEELVLDRCVRITDTGLSYLST, MSSLRSLYLRWCCQVQDFGLKHLLA, and LQELEELELTNCPGATPELFKYFSQ.

As to quaternary structure, interacts with SKP1 and CUL1.

In terms of biological role, substrate-recognition component of the SCF (SKP1-CUL1-F-box protein)-type E3 ubiquitin ligase complex. This Homo sapiens (Human) protein is F-box/LRR-repeat protein 16 (FBXL16).